A 148-amino-acid polypeptide reads, in one-letter code: uncharacterized protein (148 aa).

Positions 36–45 are enriched in low complexity; sequence PGAPSAGPMS. A disordered region spans residues 36-148; sequence PGAPSAGPMS…SGTAFFPGTT (113 aa). Positions 46 to 55 are enriched in polar residues; sequence DSNSKGSTPR.

This is an uncharacterized protein from Bovine leukemia virus (isolate Japanese BLV-1) (BLV).